The chain runs to 267 residues: Dihydropteroate synthase (267 aa).

The Pterin-binding domain occupies 1–251 (MTKTKIMGIL…NVELNAKLAK (251 aa)). Asparagine 11 serves as a coordination point for Mg(2+). (7,8-dihydropterin-6-yl)methyl diphosphate is bound by residues threonine 51, aspartate 84, asparagine 103, aspartate 167, lysine 203, and 239–241 (RVH).

It belongs to the DHPS family. As to quaternary structure, homodimer. It depends on Mg(2+) as a cofactor.

The enzyme catalyses (7,8-dihydropterin-6-yl)methyl diphosphate + 4-aminobenzoate = 7,8-dihydropteroate + diphosphate. It participates in cofactor biosynthesis; tetrahydrofolate biosynthesis; 7,8-dihydrofolate from 2-amino-4-hydroxy-6-hydroxymethyl-7,8-dihydropteridine diphosphate and 4-aminobenzoate: step 1/2. Functionally, catalyzes the condensation of para-aminobenzoate (pABA) with 6-hydroxymethyl-7,8-dihydropterin diphosphate (DHPt-PP) to form 7,8-dihydropteroate (H2Pte), the immediate precursor of folate derivatives. In Staphylococcus aureus (strain Mu50 / ATCC 700699), this protein is Dihydropteroate synthase (folP).